The following is a 341-amino-acid chain: Serine/threonine-protein kinase-like protein At5g23170 (341 aa).

One can recognise a Protein kinase domain in the interval 16–298 (FSPSKLIGKG…FGEITAEIVA (283 aa)). ATP contacts are provided by residues 22-30 (IGKGSHGYV) and lysine 51. The tract at residues 52–75 (TPSSLSPSSPSSSSSSKSEQTKKL) is disordered. Residues 53–69 (PSSLSPSSPSSSSSSKS) are compositionally biased toward low complexity. The Proton acceptor role is filled by aspartate 153. Residues 311–332 (MSVLRRVVKLKRRKKRLRETLT) adopt a coiled-coil conformation.

It belongs to the protein kinase superfamily. Ser/Thr protein kinase family. As to expression, ubiquitous. Higher expression in mature stamina and pollen.

It catalyses the reaction L-seryl-[protein] + ATP = O-phospho-L-seryl-[protein] + ADP + H(+). It carries out the reaction L-threonyl-[protein] + ATP = O-phospho-L-threonyl-[protein] + ADP + H(+). The sequence is that of Serine/threonine-protein kinase-like protein At5g23170 from Arabidopsis thaliana (Mouse-ear cress).